Reading from the N-terminus, the 747-residue chain is Polyribonucleotide nucleotidyltransferase (747 aa).

D493 and D499 together coordinate Mg(2+). The KH domain occupies 560 to 619 (PRIITLQINPEKIGALIGPGGKTVRGITEATGAQIDIEEDGRVYISTPDAAAAQQAVAMV). Residues 629–698 (GDIFLGKVVR…GTGKVSLSRR (70 aa)) enclose the S1 motif domain. The tract at residues 705 to 747 (TAEDRRAAGAGRGLRDGGGRSGGSDRGGDRGPRGDDRQRPRRR) is disordered. Composition is skewed to basic and acidic residues over residues 706–722 (AEDR…RDGG) and 730–747 (RGGD…PRRR).

The protein belongs to the polyribonucleotide nucleotidyltransferase family. The cofactor is Mg(2+).

The protein localises to the cytoplasm. It carries out the reaction RNA(n+1) + phosphate = RNA(n) + a ribonucleoside 5'-diphosphate. Its function is as follows. Involved in mRNA degradation. Catalyzes the phosphorolysis of single-stranded polyribonucleotides processively in the 3'- to 5'-direction. This is Polyribonucleotide nucleotidyltransferase from Roseiflexus sp. (strain RS-1).